The sequence spans 177 residues: Large ribosomal subunit protein uL6 (177 aa).

It belongs to the universal ribosomal protein uL6 family. As to quaternary structure, part of the 50S ribosomal subunit.

Its function is as follows. This protein binds to the 23S rRNA, and is important in its secondary structure. It is located near the subunit interface in the base of the L7/L12 stalk, and near the tRNA binding site of the peptidyltransferase center. This is Large ribosomal subunit protein uL6 from Methylobacillus flagellatus (strain ATCC 51484 / DSM 6875 / VKM B-1610 / KT).